An 864-amino-acid polypeptide reads, in one-letter code: DNA mismatch repair protein MutS (864 aa).

613–620 (GPNMGGKS) is an ATP binding site.

Belongs to the DNA mismatch repair MutS family.

Its function is as follows. This protein is involved in the repair of mismatches in DNA. It is possible that it carries out the mismatch recognition step. This protein has a weak ATPase activity. In Actinobacillus pleuropneumoniae serotype 7 (strain AP76), this protein is DNA mismatch repair protein MutS.